A 200-amino-acid polypeptide reads, in one-letter code: ASI1-immunoprecipitated protein 1 (200 aa).

In terms of domain architecture, RRM spans 18–101 (RTVYVDELTP…RPVRACAAEP (84 aa)).

Component of the ASI1-AIPP1-EDM2 (AAE) RNA regulatory complex composed of at least AIPP1/EDM3, ASI1 and EDM2 and may contain CPL2, AIPP2 and AIPP3/BDT1. Binds directly to ASI1 and EDM2 and may function as a bridge protein between them. Co-associates with EDM2 to histone H3 lysine 9 dimethylation (H3K9me2)-marked chromatin and transcripts at a critical proximal polyadenylation site of RPP7 to hamper proximal transcript polyadeylation/termination.

It localises to the nucleus. Prevents gene silencing by suppressing CHG methylation as well as histone H3 lysine 9 dimethylation (H3K9me2) status at target loci. Collaboratively with ASI1 and EDM2, the AAE complex regulates alternative RNA processing (e.g. alternative splicing) and epigenetic silencing (e.g. H3K9me2) of intronic heterochromatin-containing genes as well as genic heterochromatin-containing genes by promoting distal 3' polyadenylation, thus being required for the accumulation of their full-length transcripts. May also modulate transposable elements (TE) expression. Mediates RPP7-dependent race-specific disease resistance by promoting histone H3 lysine 9 dimethylation (H3K9me2) at the proximal RPP7 polyadenylation site, thus controlling alternative polyadenylation of RPP7 immune receptor transcripts and facilitating 2-phosphoserine RNAPII occupancy. In cv. Columbia, required for RPP7-dependent disease resistance against the Hyaloperonospora arabidopsidis isolate Hiks1. This Arabidopsis thaliana (Mouse-ear cress) protein is ASI1-immunoprecipitated protein 1.